We begin with the raw amino-acid sequence, 286 residues long: Undecaprenyl-diphosphatase (286 aa).

Helical transmembrane passes span 50-70, 97-117, 126-146, 156-176, 200-220, 236-256, and 264-284; these read GAAF…VYFW, MGWL…IFQD, LWIV…ADAV, LTYK…IPGV, SFLL…YKVM, LATL…LKFV, and FVWY…FNVI.

Belongs to the UppP family.

The protein localises to the cell membrane. It catalyses the reaction di-trans,octa-cis-undecaprenyl diphosphate + H2O = di-trans,octa-cis-undecaprenyl phosphate + phosphate + H(+). In terms of biological role, catalyzes the dephosphorylation of undecaprenyl diphosphate (UPP). Confers resistance to bacitracin. This chain is Undecaprenyl-diphosphatase, found in Arthrobacter sp. (strain FB24).